Reading from the N-terminus, the 602-residue chain is uncharacterized protein (602 aa).

Asparagine 305, asparagine 497, and asparagine 577 each carry an N-linked (GlcNAc...) asparagine glycan.

Post-translationally, N-glycosylated.

It localises to the vacuole. This is an uncharacterized protein from Saccharomyces cerevisiae (strain ATCC 204508 / S288c) (Baker's yeast).